Consider the following 498-residue polypeptide: ATP synthase subunit beta, chloroplastic (498 aa).

172–179 lines the ATP pocket; sequence GGAGVGKT.

This sequence belongs to the ATPase alpha/beta chains family. As to quaternary structure, F-type ATPases have 2 components, CF(1) - the catalytic core - and CF(0) - the membrane proton channel. CF(1) has five subunits: alpha(3), beta(3), gamma(1), delta(1), epsilon(1). CF(0) has four main subunits: a(1), b(1), b'(1) and c(9-12).

It localises to the plastid. The protein resides in the chloroplast thylakoid membrane. It catalyses the reaction ATP + H2O + 4 H(+)(in) = ADP + phosphate + 5 H(+)(out). Functionally, produces ATP from ADP in the presence of a proton gradient across the membrane. The catalytic sites are hosted primarily by the beta subunits. This chain is ATP synthase subunit beta, chloroplastic, found in Galbulimima belgraveana (Northern pigeonberry ash).